Consider the following 213-residue polypeptide: Orotate phosphoribosyltransferase (213 aa).

A 5-phospho-alpha-D-ribose 1-diphosphate-binding site is contributed by Lys26. Residue Phe34 to Phe35 coordinates orotate. 5-phospho-alpha-D-ribose 1-diphosphate is bound by residues Tyr72 to Lys73, Arg99, Lys100, Lys103, His105, and Asp124 to Ser132. Positions 128 and 156 each coordinate orotate.

The protein belongs to the purine/pyrimidine phosphoribosyltransferase family. PyrE subfamily. In terms of assembly, homodimer. Mg(2+) is required as a cofactor.

It carries out the reaction orotidine 5'-phosphate + diphosphate = orotate + 5-phospho-alpha-D-ribose 1-diphosphate. Its pathway is pyrimidine metabolism; UMP biosynthesis via de novo pathway; UMP from orotate: step 1/2. Its function is as follows. Catalyzes the transfer of a ribosyl phosphate group from 5-phosphoribose 1-diphosphate to orotate, leading to the formation of orotidine monophosphate (OMP). The sequence is that of Orotate phosphoribosyltransferase from Methylococcus capsulatus (strain ATCC 33009 / NCIMB 11132 / Bath).